Consider the following 207-residue polypeptide: Small ribosomal subunit protein uS4 (207 aa).

The tract at residues 20–45 (TPKAARYMEKRPYAPGEHGRTKRKAD) is disordered. The 66-residue stretch at 93-158 (MRLDALVLRA…TEPFQVAAAG (66 aa)) folds into the S4 RNA-binding domain.

It belongs to the universal ribosomal protein uS4 family. As to quaternary structure, part of the 30S ribosomal subunit. Contacts protein S5. The interaction surface between S4 and S5 is involved in control of translational fidelity.

In terms of biological role, one of the primary rRNA binding proteins, it binds directly to 16S rRNA where it nucleates assembly of the body of the 30S subunit. Its function is as follows. With S5 and S12 plays an important role in translational accuracy. This Leifsonia xyli subsp. xyli (strain CTCB07) protein is Small ribosomal subunit protein uS4.